Reading from the N-terminus, the 56-residue chain is Large ribosomal subunit protein bL33 (56 aa).

Belongs to the bacterial ribosomal protein bL33 family.

The chain is Large ribosomal subunit protein bL33 (rpmG) from Rickettsia prowazekii (strain Madrid E).